Reading from the N-terminus, the 250-residue chain is Ribosomal RNA small subunit methyltransferase J (250 aa).

S-adenosyl-L-methionine contacts are provided by residues 96–97 and Asp-168; that span reads RD.

The protein belongs to the methyltransferase superfamily. RsmJ family.

Its subcellular location is the cytoplasm. The enzyme catalyses guanosine(1516) in 16S rRNA + S-adenosyl-L-methionine = N(2)-methylguanosine(1516) in 16S rRNA + S-adenosyl-L-homocysteine + H(+). Functionally, specifically methylates the guanosine in position 1516 of 16S rRNA. This chain is Ribosomal RNA small subunit methyltransferase J, found in Neisseria gonorrhoeae (strain NCCP11945).